We begin with the raw amino-acid sequence, 96 residues long: Large ribosomal subunit protein eL43 (96 aa).

The segment at Cys-41–Cys-62 adopts a C4-type zinc-finger fold.

This sequence belongs to the eukaryotic ribosomal protein eL43 family. Requires Zn(2+) as cofactor.

The sequence is that of Large ribosomal subunit protein eL43 from Methanococcus maripaludis (strain C5 / ATCC BAA-1333).